We begin with the raw amino-acid sequence, 191 residues long: Fe/S biogenesis protein NfuA (191 aa).

Residues Cys-149 and Cys-152 each coordinate [4Fe-4S] cluster.

It belongs to the NfuA family. As to quaternary structure, homodimer. [4Fe-4S] cluster serves as cofactor.

Its function is as follows. Involved in iron-sulfur cluster biogenesis. Binds a 4Fe-4S cluster, can transfer this cluster to apoproteins, and thereby intervenes in the maturation of Fe/S proteins. Could also act as a scaffold/chaperone for damaged Fe/S proteins. This Pectobacterium carotovorum subsp. carotovorum (strain PC1) protein is Fe/S biogenesis protein NfuA.